The chain runs to 237 residues: Ribonuclease PH (237 aa).

Phosphate is bound by residues R86 and 124–126 (GTR).

The protein belongs to the RNase PH family. Homohexameric ring arranged as a trimer of dimers.

The catalysed reaction is tRNA(n+1) + phosphate = tRNA(n) + a ribonucleoside 5'-diphosphate. In terms of biological role, phosphorolytic 3'-5' exoribonuclease that plays an important role in tRNA 3'-end maturation. Removes nucleotide residues following the 3'-CCA terminus of tRNAs; can also add nucleotides to the ends of RNA molecules by using nucleoside diphosphates as substrates, but this may not be physiologically important. Probably plays a role in initiation of 16S rRNA degradation (leading to ribosome degradation) during starvation. The polypeptide is Ribonuclease PH (Shewanella woodyi (strain ATCC 51908 / MS32)).